The primary structure comprises 471 residues: Glutamate--tRNA ligase 2 (471 aa).

A 'HIGH' region motif is present at residues 15–25; the sequence is PSPTGYLHIGG. Positions 243 to 247 match the 'KMSKS' region motif; the sequence is KLSKR. Residue K246 coordinates ATP.

The protein belongs to the class-I aminoacyl-tRNA synthetase family. Glutamate--tRNA ligase type 1 subfamily. Monomer.

The protein localises to the cytoplasm. The catalysed reaction is tRNA(Glu) + L-glutamate + ATP = L-glutamyl-tRNA(Glu) + AMP + diphosphate. Its function is as follows. Catalyzes the attachment of glutamate to tRNA(Glu) in a two-step reaction: glutamate is first activated by ATP to form Glu-AMP and then transferred to the acceptor end of tRNA(Glu). This is Glutamate--tRNA ligase 2 from Cereibacter sphaeroides (strain ATCC 17025 / ATH 2.4.3) (Rhodobacter sphaeroides).